The primary structure comprises 260 residues: Ribonuclease 3 (260 aa).

Positions 16 to 145 constitute an RNase III domain; that stretch reads VQLLESRLGL…VFGAVFLTSG (130 aa). Glu-58 contributes to the Mg(2+) binding site. Asp-62 is an active-site residue. Residues Asp-131 and Glu-134 each contribute to the Mg(2+) site. Glu-134 is a catalytic residue. Positions 172 to 241 constitute a DRBM domain; the sequence is DYKTLLQEMA…AQATLEKLRE (70 aa). The disordered stretch occupies residues 219 to 260; sequence ATGRSKKEAEQSAAQATLEKLREDAACPTSPPPGTPRHDTPA.

The protein belongs to the ribonuclease III family. In terms of assembly, homodimer. The cofactor is Mg(2+).

It localises to the cytoplasm. The catalysed reaction is Endonucleolytic cleavage to 5'-phosphomonoester.. Digests double-stranded RNA. Involved in the processing of primary rRNA transcript to yield the immediate precursors to the large and small rRNAs (23S and 16S). Processes some mRNAs, and tRNAs when they are encoded in the rRNA operon. Processes pre-crRNA and tracrRNA of type II CRISPR loci if present in the organism. In Myxococcus xanthus (strain DK1622), this protein is Ribonuclease 3.